The primary structure comprises 161 residues: Probable cell wall elongation regulator TseB (161 aa).

At 1 to 5 (MRKKA) the chain is on the cytoplasmic side. The chain crosses the membrane as a helical span at residues 6-26 (LIFTVIFGIIFLAVLLVSASI). Residues 27 to 161 (YKSAMAQKEE…TGKILKNITP (135 aa)) lie on the Extracellular side of the membrane.

Interacts with the penicillin-binding protein PBP2A, a monofunctional transpeptidase.

Its subcellular location is the cell membrane. Its function is as follows. Required for normal cell shape. Plays an important role in cell wall elongation during exponential phase and spore outgrowth. Probably regulates the activity of the penicillin-binding protein PBP2A through a direct interaction. Not required for PBP2A activity, stability and localization. The protein is Probable cell wall elongation regulator TseB of Bacillus subtilis (strain 168).